The following is a 255-amino-acid chain: Diphthine synthase (255 aa).

S-adenosyl-L-methionine-binding positions include Leu9, Asp85, Val88, 113-114 (SI), Leu164, Ala207, and His232.

Belongs to the diphthine synthase family. Homodimer.

It catalyses the reaction 2-[(3S)-amino-3-carboxypropyl]-L-histidyl-[translation elongation factor 2] + 3 S-adenosyl-L-methionine = diphthine-[translation elongation factor 2] + 3 S-adenosyl-L-homocysteine + 3 H(+). Its pathway is protein modification; peptidyl-diphthamide biosynthesis. Functionally, S-adenosyl-L-methionine-dependent methyltransferase that catalyzes the trimethylation of the amino group of the modified target histidine residue in translation elongation factor 2 (EF-2), to form an intermediate called diphthine. The three successive methylation reactions represent the second step of diphthamide biosynthesis. The sequence is that of Diphthine synthase from Methanococcus vannielii (strain ATCC 35089 / DSM 1224 / JCM 13029 / OCM 148 / SB).